The chain runs to 354 residues: LAS seventeen-binding protein 5 (354 aa).

Residues 15–161 (TIFRIVSSRD…LGQTVKQRYS (147 aa)) form the VHS domain. 2 disordered regions span residues 160 to 184 (YSKS…DDSA) and 296 to 354 (SAQD…HNKI). The span at 296 to 310 (SAQDDSSDESDHGSY) shows a compositional bias: basic and acidic residues.

The protein belongs to the LSB5 family. In terms of assembly, interacts with SLA1 and LAS17.

It is found in the cytoplasm. The protein resides in the cell cortex. It localises to the cytoskeleton. Its function is as follows. Essential for the organization of the actin cytoskeleton, fluid phase endocytosis and vesicle trafficking, together with YSC84. This is LAS seventeen-binding protein 5 (LSB5) from Saccharomyces cerevisiae (strain ATCC 204508 / S288c) (Baker's yeast).